The chain runs to 75 residues: Sec-independent protein translocase protein TatA (75 aa).

Residues 1–21 (MGGFSIWHWLIVLVIVLLVFG) form a helical membrane-spanning segment. Residues 41–75 (KGMHDDDKPAGKLGDDSRTAEQAREAQAERDRDAR) form a disordered region.

Belongs to the TatA/E family. In terms of assembly, the Tat system comprises two distinct complexes: a TatABC complex, containing multiple copies of TatA, TatB and TatC subunits, and a separate TatA complex, containing only TatA subunits. Substrates initially bind to the TatABC complex, which probably triggers association of the separate TatA complex to form the active translocon.

It is found in the cell inner membrane. Functionally, part of the twin-arginine translocation (Tat) system that transports large folded proteins containing a characteristic twin-arginine motif in their signal peptide across membranes. TatA could form the protein-conducting channel of the Tat system. This chain is Sec-independent protein translocase protein TatA, found in Xanthomonas axonopodis pv. citri (strain 306).